The primary structure comprises 258 residues: Small ribosomal subunit protein uS2 (258 aa).

The segment at Lys-226 to Asp-258 is disordered. Positions Asp-244–Asp-258 are enriched in acidic residues.

Belongs to the universal ribosomal protein uS2 family.

This Lactobacillus acidophilus (strain ATCC 700396 / NCK56 / N2 / NCFM) protein is Small ribosomal subunit protein uS2.